The following is a 105-amino-acid chain: Small cysteine and glycine repeat-containing protein 6 (105 aa).

Residues 4–83 (CGCGGCGGGC…HSCGCGCGCG (80 aa)) form a 13 X 2 AA repeats of CG region.

It belongs to the KRTAP type 28 family.

Its function is as follows. In the hair cortex, hair keratin intermediate filaments are embedded in an interfilamentous matrix, consisting of hair keratin-associated proteins (KRTAP), which are essential for the formation of a rigid and resistant hair shaft through their extensive disulfide bond cross-linking with abundant cysteine residues of hair keratins. The matrix proteins include the high-sulfur and high-glycine-tyrosine keratins. The polypeptide is Small cysteine and glycine repeat-containing protein 6 (Homo sapiens (Human)).